The following is a 93-amino-acid chain: Putative septation protein SpoVG (93 aa).

Belongs to the SpoVG family.

Could be involved in septation. The protein is Putative septation protein SpoVG of Alkaliphilus oremlandii (strain OhILAs) (Clostridium oremlandii (strain OhILAs)).